The sequence spans 759 residues: ARF GTPase-activating protein GIT2 (759 aa).

Positions 1-124 constitute an Arf-GAP domain; that stretch reads MSKRLRSNDV…AFVHRLPCRD (124 aa). A C4-type zinc finger spans residues 11 to 34; sequence CADCSGPDPSWASVNRGTLICDEC. 3 ANK repeats span residues 132 to 161, 166 to 198, and 199 to 228; these read DLSKQLHSSVRTGNLETCLRLLSLGAQANF, KGSTPLHVASKAGQILQAELLAVYGADPGTHDS, and SGKTPVDYARQGGHRELAERLVEIQYELTD. Disordered stretches follow at residues 376 to 422 and 469 to 641; these read VSNQ…DLSD and QSEN…PSTE. Over residues 385–402 the composition is skewed to acidic residues; that stretch reads QDNDQPDYDSVASDEDTD. The stretch at 451–478 forms a coiled coil; the sequence is NNNLSGELRIMQKKLQTLQSENSSLRRQ. Residues 469 to 489 are compositionally biased toward polar residues; sequence QSENSSLRRQATASACQVQTA. Low complexity predominate over residues 555 to 569; it reads TSSSSLPSFPSTLSW. A compositionally biased stretch (basic and acidic residues) spans 570–583; sequence SRDESTRRASRLEK.

In terms of assembly, may form heterooligomers with GIT1. Directly interacts with protein Piccolo/PCLO. Interacts with PPFIA1 and PPFIA2. Interacts with ARHGEF7. Identified in a complex with ARHGEF6 and BIN2. Interacts with PAK3. Interacts with PXN/paxillin. Interacts with TGFB1I1. Forms a complex with EFNB1 and GRB4/NCK2.

In terms of biological role, GTPase-activating protein for ADP ribosylation factor family members, including ARF1. The sequence is that of ARF GTPase-activating protein GIT2 (Git2) from Rattus norvegicus (Rat).